The chain runs to 789 residues: MTLENRSTCLMTCQSSLLPKKPRFLSQKMWAPHLVVAYLIFVTLALALPGTQTRFSQEPADQTVVAGHRAVLPCVLLNYSGIVQWTKDGLALGMGQGLKAWPRYRVVGSADAGQYNLEITDAELSDDASYECQATEAALRSRRAKLTVLIPPEDTRIDGGPVILLQAGTPYNLTCRAFNAKPAATIIWFRDGTQQEGAVTSTELLKDGKRETTISQLLIQPTDLDIGRVFTCRSMNEAIPNGKETSIELDVHHPPTVTLSIEPQTVLEGERVIFTCQATANPEILGYRWAKGGFLIEDAHESRYETNVDYSFFTEPVSCEVYNKVGSTNVSTLVNVHFAPRIVVYPKPTTTDIGSDVTLTCVWVGNPPLTLTWTKKDSNMVLSNSNQLLLKSVTQADAGTYTCRAIVPRIGVAEREVPLYVNGPPIISSEAVQFAVRGDGGKVECFIGSTPPPDRIAWAWKENFLEVGTLERYTVERTNSGSGVLSTLTINNVMEADFQTHYNCTAWNSFGPGTAIIQLEEREVLPVGIIAGATIGAGILLVFSFAALVFFLYRRRKGSRKDVTLRKLDIKVETVNREPLTMHSDREDDTTSISTATRVMKAIYSSFKDDVDLKQDLHCDTIETREEYEMKDPTNGYYNVRAHEDRPSSRAVLYADYRAPGPTRFDGRPSSRLSHSSGYAQLNTYSRAPASDYGTEPTPSGPSAPGGTDTTSQLSYENYEKFNSHPFPGAAGYPTYRLGYPQAPPSGLERTPYEAYDPIGKYATATRFSYTSQHSDYGQRFQQRMQTHV.

A signal peptide spans 1 to 47 (MTLENRSTCLMTCQSSLLPKKPRFLSQKMWAPHLVVAYLIFVTLALA). Residues asparagine 5, asparagine 78, and asparagine 172 are each glycosylated (N-linked (GlcNAc...) asparagine). The Extracellular segment spans residues 48-531 (LPGTQTRFSQ…REVLPVGIIA (484 aa)). 5 consecutive Ig-like C2-type domains span residues 49 to 147 (PGTQ…AKLT), 152 to 248 (PEDT…TSIE), 255 to 335 (PTVT…TLVN), 340 to 419 (PRIV…EVPL), and 424 to 520 (PPII…IQLE). A disulfide bridge connects residues cysteine 74 and cysteine 132. 2 cysteine pairs are disulfide-bonded: cysteine 175–cysteine 232 and cysteine 276–cysteine 319. The N-linked (GlcNAc...) asparagine glycan is linked to asparagine 329. An intrachain disulfide couples cysteine 361 to cysteine 403. The Cell attachment site signature appears at 437 to 439 (RGD). Cysteine 445 and cysteine 504 form a disulfide bridge. Asparagine 503 is a glycosylation site (N-linked (GlcNAc...) asparagine). Residues 532–552 (GATIGAGILLVFSFAALVFFL) traverse the membrane as a helical segment. Residues 553–789 (YRRRKGSRKD…RFQQRMQTHV (237 aa)) lie on the Cytoplasmic side of the membrane. Serine 606 bears the Phosphoserine mark. Phosphotyrosine; by FYN occurs at positions 637 and 638. Tyrosine 654 and tyrosine 657 each carry phosphotyrosine. Residues 687 to 713 (RAPASDYGTEPTPSGPSAPGGTDTTSQ) form a disordered region. Residues 694–712 (GTEPTPSGPSAPGGTDTTS) show a composition bias toward low complexity. The residue at position 756 (tyrosine 756) is a Phosphotyrosine.

Belongs to the immunoglobulin superfamily. As to quaternary structure, interacts with TJP1/ZO-1 and with NPHS2/podocin (via the C-terminus). Interacts with NPHS1/nephrin (via the Ig-like domains); this interaction is dependent on KIRREL1 glycosylation. Homodimer (via the Ig-like domains). Interacts when tyrosine-phosphorylated with GRB2. Post-translationally, phosphorylation probably regulates the interaction with NPHS2. Phosphorylated at Tyr-637 and Tyr-638 by FYN, leading to GRB2 binding. N-glycosylated.

The protein localises to the cell membrane. Its function is as follows. Required for proper function of the glomerular filtration barrier. It is involved in the maintenance of a stable podocyte architecture with interdigitating foot processes connected by specialized cell-cell junctions, known as the slit diaphragm. It is a signaling protein that needs the presence of TEC kinases to fully trans-activate the transcription factor AP-1. In Rattus norvegicus (Rat), this protein is Kin of IRRE-like protein 1 (Kirrel1).